We begin with the raw amino-acid sequence, 314 residues long: Olfactory receptor 5P68 (314 aa).

Residues 1 to 28 (MAFLHNGNHTAVTEFILLGLTDDPVFRV) lie on the Extracellular side of the membrane. The N-linked (GlcNAc...) asparagine glycan is linked to Asn-8. The helical transmembrane segment at 29-49 (ILFTIILCIYLVTVSGNLSTI) threads the bilayer. The Cytoplasmic segment spans residues 50–57 (LLIRVSSQ). A helical membrane pass occupies residues 58-78 (LHHPMYFFLSHLASVDIGYSS). Over 79-102 (SVTPNMLANFLVEKNTISYLGCTI) the chain is Extracellular. Residues Cys-100 and Cys-192 are joined by a disulfide bond. The chain crosses the membrane as a helical span at residues 103–123 (QLSLAAFCGTVECFLLATMAY). Residues 124–136 (DRFMAICSPLLYS) lie on the Cytoplasmic side of the membrane. A helical transmembrane segment spans residues 137-157 (TKMSTQVCIQLIVGSYIGGFL). Over 158–199 (NASSFTLFFLSFLFCGPNRINHFYCDFAPLVALSCSDVSVSE) the chain is Extracellular. A helical membrane pass occupies residues 200–220 (VVTSFFSGSVTMITMLVIAIS). Residues 221 to 240 (YTYILITILKMRSTEGRHKA) lie on the Cytoplasmic side of the membrane. A helical membrane pass occupies residues 241 to 261 (FSTCTSHLTAVTLFYGTITFI). The Extracellular portion of the chain corresponds to 262–274 (YVMPKSSFSTDQN). The chain crosses the membrane as a helical span at residues 275–295 (KVVSVFYMVVIPMLNPLIYSL). Over 296-314 (RNNEIKDALKRHLGKKIFS) the chain is Cytoplasmic.

This sequence belongs to the G-protein coupled receptor 1 family.

It is found in the cell membrane. Functionally, potential odorant receptor. The polypeptide is Olfactory receptor 5P68 (Mus musculus (Mouse)).